Here is a 695-residue protein sequence, read N- to C-terminus: GATA zinc finger domain-containing protein 16 (695 aa).

3 disordered regions span residues 82-111 (SPIL…SNNA), 134-304 (VVNS…QQDK), and 422-472 (NNQF…KMRY). Low complexity-rich tracts occupy residues 87–111 (SQQQ…SNNA) and 140–149 (KTTTTNNKPP). The stretch at 150–174 (KQSKRKEKERLEEEKQTVAQQQQYQ) forms a coiled coil. Basic and acidic residues predominate over residues 155 to 165 (KEKERLEEEKQ). Positions 199–209 (VSTTPYGNSQF) are enriched in polar residues. Residues 210-298 (NNNNNNNNNN…NSNSNNNNNN (89 aa)) are compositionally biased toward low complexity. Polar residues predominate over residues 422–433 (NNQFSGDKQSAL). Residues 434–446 (NNVKNSKGGNTNN) show a composition bias toward low complexity. The GATA-type zinc-finger motif lies at 479–504 (CHTCGVTNTPEWRRGPNGAKTLCNAC). The segment at 523-646 (NSTGVNITEP…TTNSITTPTT (124 aa)) is disordered. Low complexity-rich tracts occupy residues 544–556 (DNNN…SDSN) and 564–646 (GSNN…TPTT).

The protein is GATA zinc finger domain-containing protein 16 (gtaP) of Dictyostelium discoideum (Social amoeba).